Consider the following 312-residue polypeptide: Pre-mRNA-splicing factor 38A (312 aa).

The N-terminal protein interaction domain stretch occupies residues 1–179; it reads MANRTVKDAH…VLEETEQLDP (179 aa). Residues 180-312 form a disordered region; sequence RVSALEEDMD…SHKKSRRGNE (133 aa). A compositionally biased stretch (acidic residues) spans 184 to 201; sequence LEEDMDDVESSEEEEDED. Over residues 202–223 the composition is skewed to basic and acidic residues; sequence EKGRDPSPEHHRRNYRDLDRPR. Basic residues-rich tracts occupy residues 224 to 294 and 301 to 312; these read RSPS…RSHS and KKSHKKSRRGNE.

Belongs to the PRP38 family. In terms of assembly, component of the spliceosome B complex.

It is found in the nucleus. Functionally, involved in pre-mRNA splicing as a component of the spliceosome. The polypeptide is Pre-mRNA-splicing factor 38A (prpf38a) (Xenopus tropicalis (Western clawed frog)).